Reading from the N-terminus, the 327-residue chain is Phenylalanine--tRNA ligase alpha subunit (327 aa).

Mg(2+) is bound at residue glutamate 252.

This sequence belongs to the class-II aminoacyl-tRNA synthetase family. Phe-tRNA synthetase alpha subunit type 1 subfamily. Tetramer of two alpha and two beta subunits. Mg(2+) serves as cofactor.

The protein localises to the cytoplasm. The catalysed reaction is tRNA(Phe) + L-phenylalanine + ATP = L-phenylalanyl-tRNA(Phe) + AMP + diphosphate + H(+). This chain is Phenylalanine--tRNA ligase alpha subunit, found in Serratia proteamaculans (strain 568).